The following is a 121-amino-acid chain: Putative membrane protein insertion efficiency factor (121 aa).

The protein belongs to the UPF0161 family.

The protein localises to the cell membrane. Could be involved in insertion of integral membrane proteins into the membrane. In Rhodococcus opacus (strain B4), this protein is Putative membrane protein insertion efficiency factor.